A 192-amino-acid chain; its full sequence is Probable GTP-binding protein EngB (192 aa).

The EngB-type G domain occupies 22–192 (GRPEIVFVGR…LLERLDLFSQ (171 aa)). GTP is bound by residues 30-37 (GRSNVGKS), 57-61 (GKTRL), 75-78 (DLPG), 142-145 (TKWD), and 172-174 (YSS). 2 residues coordinate Mg(2+): S37 and T59.

The protein belongs to the TRAFAC class TrmE-Era-EngA-EngB-Septin-like GTPase superfamily. EngB GTPase family. Mg(2+) serves as cofactor.

Necessary for normal cell division and for the maintenance of normal septation. The protein is Probable GTP-binding protein EngB of Chlorobaculum parvum (strain DSM 263 / NCIMB 8327) (Chlorobium vibrioforme subsp. thiosulfatophilum).